A 164-amino-acid chain; its full sequence is Large ribosomal subunit protein bL17 (164 aa).

Positions 127–164 (RARTDSVPARKGAGKKDASRVSGTVPDGQSQKIGKKKE) are disordered.

This sequence belongs to the bacterial ribosomal protein bL17 family. Part of the 50S ribosomal subunit. Contacts protein L32.

This is Large ribosomal subunit protein bL17 from Treponema pallidum (strain Nichols).